Consider the following 785-residue polypeptide: LPS-assembly protein LptD (785 aa).

The first 58 residues, 1 to 58 (MSCSCLCMSLYRGADRIGRFYTAHCPQDMALCMHRQKLNPLALALAAAFALNAPAALA), serve as a signal peptide directing secretion.

It belongs to the LptD family. Component of the lipopolysaccharide transport and assembly complex. Interacts with LptE and LptA.

The protein localises to the cell outer membrane. Functionally, together with LptE, is involved in the assembly of lipopolysaccharide (LPS) at the surface of the outer membrane. The chain is LPS-assembly protein LptD from Chromobacterium violaceum (strain ATCC 12472 / DSM 30191 / JCM 1249 / CCUG 213 / NBRC 12614 / NCIMB 9131 / NCTC 9757 / MK).